Reading from the N-terminus, the 636-residue chain is MSKVIGIDLGTTNSCVAVMEGGEPVVIANAEGSRTTPSMVAFAESGERLVGQQAKRQAVTNPENTLFAIKRLIGRKYDTEEVRKDISISPFKIVKADNGDAWVEARGKMYSAPEISAMVLQKMKQTAEDYLGETVTDAVITVPAYFNDSQRQATKDAGKIAGLNVLRIINEPTAAALAYGLDKKKDEKIAVFDLGGGTFDISILELGDGVFEVKSTNGDTFLGGEDFDQRVIDWIADEFKKDQGIDLRGDKMALQRLKEAAEKAKCELSTSMETDINLPFITADATGPKHLTMKLSRAKLEALCADLLNKLEGPCRTALKDAGLSPSEVDEVILVGGMTRMPAVQKRVQEIFGKVPNKGVNPDEVVAIGAAIQGGVLRGDVKDVLLLDVTPLSLGIETLGSVMTKLIEKNTTIPCRKSQVFSTASDNQPAVTIHVLQGEREMAIDNKTLGNFELTGIPPAPRGVPQIEVTFDIDANGIVHVSAKDLGTGKEQSIRITASSGLSKEEIDKMVKEAEAHSAEDKKKRELVEARNHADTLSYSTEKSLKEYGDKIGADEKAKIEECLANLRKAMEGSDVEVLKKATDELTQASHKLAEAVYAKAQAEGAQPGGEAAGEASAKDEKVVDADFEEVKDDKK.

Thr198 carries the post-translational modification Phosphothreonine; by autocatalysis. Residues 602-636 (QAEGAQPGGEAAGEASAKDEKVVDADFEEVKDDKK) are disordered. A compositionally biased stretch (acidic residues) spans 626 to 636 (ADFEEVKDDKK).

This sequence belongs to the heat shock protein 70 family.

In terms of biological role, acts as a chaperone. The sequence is that of Chaperone protein DnaK from Geobacter sulfurreducens (strain ATCC 51573 / DSM 12127 / PCA).